A 262-amino-acid polypeptide reads, in one-letter code: Shikimate dehydrogenase (NADP(+)) (262 aa).

Residues 15–17 and Thr-62 each bind shikimate; that span reads SRS. Lys-66 serves as the catalytic Proton acceptor. Residue Glu-78 coordinates NADP(+). Shikimate contacts are provided by Asn-87 and Asp-102. Residues 126–130, 150–155, and Met-214 each bind NADP(+); these read GAGGA and NRTLAR. Tyr-216 contributes to the shikimate binding site. Residue Gly-236 participates in NADP(+) binding.

It belongs to the shikimate dehydrogenase family. Homodimer.

The catalysed reaction is shikimate + NADP(+) = 3-dehydroshikimate + NADPH + H(+). It functions in the pathway metabolic intermediate biosynthesis; chorismate biosynthesis; chorismate from D-erythrose 4-phosphate and phosphoenolpyruvate: step 4/7. Its function is as follows. Involved in the biosynthesis of the chorismate, which leads to the biosynthesis of aromatic amino acids. Catalyzes the reversible NADPH linked reduction of 3-dehydroshikimate (DHSA) to yield shikimate (SA). The protein is Shikimate dehydrogenase (NADP(+)) of Acinetobacter baumannii (strain SDF).